Reading from the N-terminus, the 109-residue chain is uncharacterized protein (109 aa).

The signal sequence occupies residues 1–28 (MNMLAYFLYCRQLLLAVVLIEFPPRLCG).

This is an uncharacterized protein from Homo sapiens (Human).